The primary structure comprises 389 residues: 8-amino-7-oxononanoate synthase (389 aa).

Residue arginine 18 participates in substrate binding. Residue 104-105 (GY) coordinates pyridoxal 5'-phosphate. Histidine 129 is a binding site for substrate. Positions 176, 204, and 232 each coordinate pyridoxal 5'-phosphate. Lysine 235 is subject to N6-(pyridoxal phosphate)lysine. Substrate is bound at residue threonine 351.

It belongs to the class-II pyridoxal-phosphate-dependent aminotransferase family. BioF subfamily. In terms of assembly, homodimer. Requires pyridoxal 5'-phosphate as cofactor.

It carries out the reaction 6-carboxyhexanoyl-[ACP] + L-alanine + H(+) = (8S)-8-amino-7-oxononanoate + holo-[ACP] + CO2. Its pathway is cofactor biosynthesis; biotin biosynthesis. Catalyzes the decarboxylative condensation of pimeloyl-[acyl-carrier protein] and L-alanine to produce 8-amino-7-oxononanoate (AON), [acyl-carrier protein], and carbon dioxide. In Citrifermentans bemidjiense (strain ATCC BAA-1014 / DSM 16622 / JCM 12645 / Bem) (Geobacter bemidjiensis), this protein is 8-amino-7-oxononanoate synthase.